The sequence spans 84 residues: Sec-independent protein translocase protein TatA (84 aa).

A helical transmembrane segment spans residues 1–21 (MGGISIWQLLIIAVIVILLFG). Residues 40-84 (KKAMSDEDKPADKKDADFEPKNIEQQKTEASAETTAETKKDKEQA) form a disordered region. 2 stretches are compositionally biased toward basic and acidic residues: residues 42-66 (AMSD…EQQK) and 75-84 (AETKKDKEQA).

This sequence belongs to the TatA/E family. In terms of assembly, the Tat system comprises two distinct complexes: a TatABC complex, containing multiple copies of TatA, TatB and TatC subunits, and a separate TatA complex, containing only TatA subunits. Substrates initially bind to the TatABC complex, which probably triggers association of the separate TatA complex to form the active translocon.

The protein resides in the cell inner membrane. Functionally, part of the twin-arginine translocation (Tat) system that transports large folded proteins containing a characteristic twin-arginine motif in their signal peptide across membranes. TatA could form the protein-conducting channel of the Tat system. This Vibrio atlanticus (strain LGP32) (Vibrio splendidus (strain Mel32)) protein is Sec-independent protein translocase protein TatA.